The following is a 289-amino-acid chain: Glucosamine-6-phosphate deaminase 1 (289 aa).

The residue at position 64 (Lys64) is an N6-acetyllysine. Residue Asp72 is the Proton acceptor; for enolization step of the active site. The active-site For ring-opening step is the Asp141. Catalysis depends on His143, which acts as the Proton acceptor; for ring-opening step. Glu148 acts as the For ring-opening step in catalysis. Thr161 is subject to Phosphothreonine.

Belongs to the glucosamine/galactosamine-6-phosphate isomerase family. As to quaternary structure, homohexamer.

It localises to the cytoplasm. It catalyses the reaction alpha-D-glucosamine 6-phosphate + H2O = beta-D-fructose 6-phosphate + NH4(+). Its pathway is nucleotide-sugar biosynthesis; UDP-N-acetyl-alpha-D-glucosamine biosynthesis; alpha-D-glucosamine 6-phosphate from D-fructose 6-phosphate: step 1/1. Allosterically activated by N-acetylglucosamine-6-phosphate (GlcNAc6P). Catalyzes the reversible conversion of alpha-D-glucosamine 6-phosphate (GlcN-6P) into beta-D-fructose 6-phosphate (Fru-6P) and ammonium ion, a regulatory reaction step in de novo uridine diphosphate-N-acetyl-alpha-D-glucosamine (UDP-GlcNAc) biosynthesis via hexosamine pathway. Deamination is coupled to aldo-keto isomerization mediating the metabolic flux from UDP-GlcNAc toward Fru-6P. At high ammonium level can drive amination and isomerization of Fru-6P toward hexosamines and UDP-GlcNAc synthesis. Has a role in fine tuning the metabolic fluctuations of cytosolic UDP-GlcNAc and their effects on hyaluronan synthesis that occur during tissue remodeling. Seems to trigger calcium oscillations in mammalian eggs. These oscillations serve as the essential trigger for egg activation and early development of the embryo. The polypeptide is Glucosamine-6-phosphate deaminase 1 (Pongo abelii (Sumatran orangutan)).